The sequence spans 298 residues: HTH-type transcriptional regulator YhaJ (298 aa).

In terms of domain architecture, HTH lysR-type spans 7 to 64 (LTLEALRVMDAIDRRGSFAAAADELGRVPSALSYTMQKLEEELDVVLFDRSGHRTKFT). The H-T-H motif DNA-binding region spans 24–43 (FAAAADELGRVPSALSYTMQ).

This sequence belongs to the LysR transcriptional regulatory family.

Its function is as follows. Positive regulator partially required for expression of genes in the locus of effacement (LEE) large pathogenicity island (PAI). Also partially responsible for expression of neighboring gene dlsT (yhaO) during late exponential growth. Binds to DNA of promoter 1 in LEE and DNA from the dlsT promoter region. This is HTH-type transcriptional regulator YhaJ (yhaJ) from Escherichia coli O157:H7.